A 223-amino-acid polypeptide reads, in one-letter code: Enolase-phosphatase E1 (223 aa).

It belongs to the HAD-like hydrolase superfamily. MasA/MtnC family. As to quaternary structure, monomer. It depends on Mg(2+) as a cofactor.

The enzyme catalyses 5-methylsulfanyl-2,3-dioxopentyl phosphate + H2O = 1,2-dihydroxy-5-(methylsulfanyl)pent-1-en-3-one + phosphate. The protein operates within amino-acid biosynthesis; L-methionine biosynthesis via salvage pathway; L-methionine from S-methyl-5-thio-alpha-D-ribose 1-phosphate: step 3/6. It functions in the pathway amino-acid biosynthesis; L-methionine biosynthesis via salvage pathway; L-methionine from S-methyl-5-thio-alpha-D-ribose 1-phosphate: step 4/6. In terms of biological role, bifunctional enzyme that catalyzes the enolization of 2,3-diketo-5-methylthiopentyl-1-phosphate (DK-MTP-1-P) into the intermediate 2-hydroxy-3-keto-5-methylthiopentenyl-1-phosphate (HK-MTPenyl-1-P), which is then dephosphorylated to form the acireductone 1,2-dihydroxy-3-keto-5-methylthiopentene (DHK-MTPene). The protein is Enolase-phosphatase E1 of Aquifex aeolicus (strain VF5).